Here is a 715-residue protein sequence, read N- to C-terminus: Palmitoyltransferase ZDHHC5 (715 aa).

Topologically, residues 1 to 13 are cytoplasmic; it reads MPAESGKRFKPSK. Residues 14-34 traverse the membrane as a helical segment; sequence YVPVSAAAIFLVGATTLFFAF. The Extracellular portion of the chain corresponds to 35–52; that stretch reads TCPGLSLNVSPAVPIYNA. A helical transmembrane segment spans residues 53–73; the sequence is IMFLFVLANFSMATFMDPGIF. Residues 74-148 lie on the Cytoplasmic side of the membrane; sequence PRAEEDEDKE…NCIGRRNYRY (75 aa). The residue at position 91 (Y91) is a Phosphotyrosine. The DHHC domain occupies 104–154; sequence KWCATCRFYRPPRCSHCSVCDNCVEEFDHHCPWVNNCIGRRNYRYFFLFLL. Catalysis depends on C134, which acts as the S-palmitoyl cysteine intermediate. The helical transmembrane segment at 149-169 threads the bilayer; sequence FFLFLLSLTAHIMGVFGFGLL. The Extracellular portion of the chain corresponds to 170–191; that stretch reads YVLYHIEELSGVRTAVTMAVMC. Residues 192-212 form a helical membrane-spanning segment; it reads VAGLFFIPVAGLTGFHVVLVA. Residues 213-715 lie on the Cytoplasmic side of the membrane; sequence RGRTTNEQVT…VGGTTYEISV (503 aa). Residue S247 is modified to Phosphoserine. The segment at 289–715 is disordered; that stretch reads GELRRTKSKG…VGGTTYEISV (427 aa). T294 is subject to Phosphothreonine. S296 and S299 each carry phosphoserine. A Phosphothreonine modification is found at T303. Position 345 is a phosphoserine (S345). A phosphothreonine mark is found at T348 and T350. Residues 359–373 show a composition bias toward low complexity; that stretch reads SSSSTSAAMPHSSSA. Phosphoserine is present on residues S380, S398, S406, and S409. T411 bears the Phosphothreonine mark. Phosphoserine occurs at positions 415, 425, 429, and 432. Positions 422–432 are enriched in low complexity; sequence SSGSRSSSLKS. A Phosphothreonine modification is found at T436. A compositionally biased stretch (polar residues) spans 442-478; sequence QLQSIRSEGTTSTSYKSLANQTRNGSLSYDSLLTPSD. S529 and S554 each carry phosphoserine. A compositionally biased stretch (low complexity) spans 581 to 597; sequence PRTSSSSDDSKRSPLSK. R617 bears the Omega-N-methylarginine mark. The residue at position 621 (S621) is a Phosphoserine. Phosphothreonine is present on T659. The segment covering 666–677 has biased composition (polar residues); sequence LKTTYSKSNGQP. A phosphoserine mark is found at S684 and S694. An Omega-N-methylarginine modification is found at R697.

It belongs to the DHHC palmitoyltransferase family. ERF2/ZDHHC9 subfamily. Post-translationally, phosphorylation regulates association with endocytic proteins and its subcellular localization. Phosphorylation by LYN during fatty acid uptake leads to inactivation of the activity. Autopalmitoylated. Palmitoylation of the C-terminal tail regulates stimulation-dependent plasma membrane motility. In terms of tissue distribution, highly enriched in brain, detectable in liver and heart, and undetectable in most other tissues.

It is found in the cell membrane. It catalyses the reaction L-cysteinyl-[protein] + hexadecanoyl-CoA = S-hexadecanoyl-L-cysteinyl-[protein] + CoA. Functionally, palmitoyltransferase that catalyzes the addition of palmitate onto various protein substrates such as CTNND2, CD36, GSDMD, NLRP3, NOD1, NOD2, STAT3 and S1PR1 thus plays a role in various biological processes including cell adhesion, inflammation, fatty acid uptake, bacterial sensing or cardiac functions. Plays an important role in the regulation of synapse efficacy by mediating palmitoylation of delta-catenin/CTNND2, thereby increasing synaptic delivery and surface stabilization of alpha-amino-3-hydroxy-5-methyl-4-isoxazole propionic acid receptors (AMPARs). Under basal conditions, remains at the synaptic membrane through FYN-mediated phosphorylation that prevents association with endocytic proteins. Neuronal activity enhances the internalization and trafficking of DHHC5 from spines to dendritic shafts where it palmitoylates delta-catenin/CTNND2. Regulates cell adhesion at the plasma membrane by palmitoylating GOLGA7B and DSG2. Plays a role in innate immune response by mediating the palmitoylation of NOD1 and NOD2 and their proper recruitment to the bacterial entry site and phagosomes. Also participates in fatty acid uptake by palmitoylating CD36 and thereby targeting it to the plasma membrane. Upon binding of fatty acids to CD36, gets phosphorylated by LYN leading to inactivation and subsequent CD36 caveolar endocytosis. Controls oligodendrocyte development by catalyzing STAT3 palmitoylation. Acts as a regulator of inflammatory response by mediating palmitoylation of NLRP3 and GSDMD. Palmitoylates NLRP3 to promote inflammasome assembly and activation. Activates pyroptosis by catalyzing palmitoylation of gasdermin-D (GSDMD), thereby promoting membrane translocation and pore formation of GSDMD. The chain is Palmitoyltransferase ZDHHC5 (Zdhhc5) from Mus musculus (Mouse).